The sequence spans 115 residues: Large ribosomal subunit protein P2 (115 aa).

Met1 carries the N-acetylmethionine modification. Residues Ser17 and Ser19 each carry the phosphoserine modification. Position 21 is an N6-acetyllysine; alternate (Lys21). At Lys21 the chain carries N6-succinyllysine; alternate. Low complexity predominate over residues 76-90; sequence APGSAAPAAGSAPAA. The segment at 76–115 is disordered; sequence APGSAAPAAGSAPAAAEEKKDEKKEESEESDDDMGFGLFD. Residues Ser79 and Ser86 each carry the phosphoserine modification. Residues 91 to 101 are compositionally biased toward basic and acidic residues; that stretch reads AEEKKDEKKEE. Phosphoserine is present on residues Ser102 and Ser105.

The protein belongs to the eukaryotic ribosomal protein P1/P2 family. As to quaternary structure, heterodimer with RPLP1 at the lateral ribosomal stalk of the large ribosomal subunit.

Its function is as follows. Plays an important role in the elongation step of protein synthesis. In Mus musculus (Mouse), this protein is Large ribosomal subunit protein P2 (Rplp2).